Reading from the N-terminus, the 350-residue chain is Cephaeline 6'-O-methyltransferase CiOMT (350 aa).

Gly-193, Asp-216, Asp-236, Met-237, and Lys-250 together coordinate S-adenosyl-L-methionine. His-254 serves as the catalytic Proton acceptor.

This sequence belongs to the class I-like SAM-binding methyltransferase superfamily. Cation-independent O-methyltransferase family.

Its subcellular location is the cytoplasm. The protein resides in the cytosol. It catalyses the reaction 7'-O-demethylcephaeline + S-adenosyl-L-methionine = cephaeline + S-adenosyl-L-homocysteine + H(+). It carries out the reaction cephaeline + S-adenosyl-L-methionine = emetine + S-adenosyl-L-homocysteine + H(+). The protein operates within alkaloid biosynthesis. Inhibited by Co(2+), Ni(2+), Zn(2+) and Mn(2+) ions. Its function is as follows. O-methyltransferase involved in the biosynthesis of ipecac and benzylisoquinoline monoterpenoid-isoquinoline alkaloids natural products, starting by the condensation of dopamine and secologanin, and including emetine and cephaeline, drugs used both as anti-protozoal (e.g. treatment of ameobiasis) and as emetic agents. Catalyzes successively the 7'-O-methylation of 7'-O-demethylcephaeline to produce cephaeline, and its 6'-O-methylation to produce emetine. The chain is Cephaeline 6'-O-methyltransferase CiOMT from Carapichea ipecacuanha (Ipecac).